The following is a 466-amino-acid chain: Ribulose bisphosphate carboxylase large chain (466 aa).

The residue at position 4 (Lys-4) is an N6,N6,N6-trimethyllysine. 2 residues coordinate substrate: Asn-113 and Thr-163. Lys-165 serves as the catalytic Proton acceptor. Residue Lys-167 coordinates substrate. 3 residues coordinate Mg(2+): Lys-191, Asp-193, and Glu-194. N6-carboxylysine is present on Lys-191. His-284 serves as the catalytic Proton acceptor. Substrate is bound by residues Arg-285, His-317, and Ser-369.

This sequence belongs to the RuBisCO large chain family. Type I subfamily. As to quaternary structure, heterohexadecamer of 8 large chains and 8 small chains; disulfide-linked. The disulfide link is formed within the large subunit homodimers. Requires Mg(2+) as cofactor. The disulfide bond which can form in the large chain dimeric partners within the hexadecamer appears to be associated with oxidative stress and protein turnover.

Its subcellular location is the plastid. The protein localises to the chloroplast. It carries out the reaction 2 (2R)-3-phosphoglycerate + 2 H(+) = D-ribulose 1,5-bisphosphate + CO2 + H2O. The enzyme catalyses D-ribulose 1,5-bisphosphate + O2 = 2-phosphoglycolate + (2R)-3-phosphoglycerate + 2 H(+). In terms of biological role, ruBisCO catalyzes two reactions: the carboxylation of D-ribulose 1,5-bisphosphate, the primary event in carbon dioxide fixation, as well as the oxidative fragmentation of the pentose substrate in the photorespiration process. Both reactions occur simultaneously and in competition at the same active site. This chain is Ribulose bisphosphate carboxylase large chain, found in Barleria prionitis (Porcupine flower).